Here is a 367-residue protein sequence, read N- to C-terminus: Alanine racemase (367 aa).

K40 (proton acceptor; specific for D-alanine) is an active-site residue. At K40 the chain carries N6-(pyridoxal phosphate)lysine. Residue R136 coordinates substrate. Y263 (proton acceptor; specific for L-alanine) is an active-site residue. A substrate-binding site is contributed by M310.

It belongs to the alanine racemase family. Pyridoxal 5'-phosphate is required as a cofactor.

It catalyses the reaction L-alanine = D-alanine. Its pathway is amino-acid biosynthesis; D-alanine biosynthesis; D-alanine from L-alanine: step 1/1. Functionally, catalyzes the interconversion of L-alanine and D-alanine. May also act on other amino acids. The polypeptide is Alanine racemase (alr) (Streptococcus suis (strain 98HAH33)).